We begin with the raw amino-acid sequence, 586 residues long: Arginine--tRNA ligase (586 aa).

The 'HIGH' region motif lies at 131–141; it reads ANPTGPLHVGH.

It belongs to the class-I aminoacyl-tRNA synthetase family. Monomer.

The protein localises to the cytoplasm. The enzyme catalyses tRNA(Arg) + L-arginine + ATP = L-arginyl-tRNA(Arg) + AMP + diphosphate. The chain is Arginine--tRNA ligase from Nitrosomonas eutropha (strain DSM 101675 / C91 / Nm57).